The chain runs to 365 residues: Probable ethanolamine-phosphate cytidylyltransferase (365 aa).

Positions 344-365 are disordered; sequence EERQRRKMGKNATEQTTIKTYA. Positions 355–365 are enriched in polar residues; sequence ATEQTTIKTYA.

It belongs to the cytidylyltransferase family.

It carries out the reaction phosphoethanolamine + CTP + H(+) = CDP-ethanolamine + diphosphate. Its pathway is phospholipid metabolism; phosphatidylethanolamine biosynthesis; phosphatidylethanolamine from ethanolamine: step 2/3. In Schizosaccharomyces pombe (strain 972 / ATCC 24843) (Fission yeast), this protein is Probable ethanolamine-phosphate cytidylyltransferase.